Reading from the N-terminus, the 376-residue chain is Glutamate 5-kinase (376 aa).

Lys-15 provides a ligand contact to ATP. Residues Ser-56, Asp-143, and Asn-155 each contribute to the substrate site. ATP is bound at residue Ser-175–Asp-176. The region spanning Lys-281 to Thr-358 is the PUA domain.

It belongs to the glutamate 5-kinase family.

The protein resides in the cytoplasm. It catalyses the reaction L-glutamate + ATP = L-glutamyl 5-phosphate + ADP. It functions in the pathway amino-acid biosynthesis; L-proline biosynthesis; L-glutamate 5-semialdehyde from L-glutamate: step 1/2. Catalyzes the transfer of a phosphate group to glutamate to form L-glutamate 5-phosphate. In Rhodopseudomonas palustris (strain TIE-1), this protein is Glutamate 5-kinase.